The sequence spans 579 residues: uncharacterized protein (579 aa).

Belongs to the UbiD family.

This is an uncharacterized protein from Chlamydia muridarum (strain MoPn / Nigg).